The following is a 311-amino-acid chain: 5'-adenylylsulfate reductase-like 3 (311 aa).

The first 22 residues, 1–22, serve as a signal peptide directing secretion; sequence MATRLLCWTALLLPIIAATAAA. Residues 23–164 enclose the Thioredoxin domain; the sequence is SPLPEACPVP…LAAFYRDVSG (142 aa). N139 carries an N-linked (GlcNAc...) asparagine glycan. A helical transmembrane segment spans residues 210-230; sequence LALATAFVILRLLYLLFPKIG. Residues N281 and N305 are each glycosylated (N-linked (GlcNAc...) asparagine).

Its subcellular location is the membrane. This is 5'-adenylylsulfate reductase-like 3 (APRL3) from Oryza sativa subsp. japonica (Rice).